A 116-amino-acid chain; its full sequence is MAALWLQSFSLLVLLVVSWPGSQAVAPAQHLCGSHLVDALYLVCGDRGFFYNPKRDVDQLLGFLPPKSGGAAAAGADNEVAEFAFKDQMEMMVKRGIVEQCCHRPCNIFDLQNYCN.

Residues 1–24 (MAALWLQSFSLLVLLVVSWPGSQA) form the signal peptide. 3 disulfides stabilise this stretch: C32–C102, C44–C115, and C101–C106. A propeptide spans 56-93 (DVDQLLGFLPPKSGGAAAAGADNEVAEFAFKDQMEMMV) (c peptide).

This sequence belongs to the insulin family. As to quaternary structure, heterodimer of a B chain and an A chain linked by two disulfide bonds.

Its subcellular location is the secreted. Its function is as follows. Insulin decreases blood glucose concentration. It increases cell permeability to monosaccharides, amino acids and fatty acids. It accelerates glycolysis, the pentose phosphate cycle, and glycogen synthesis in liver. This Lophius americanus (American angler) protein is Insulin (ins).